We begin with the raw amino-acid sequence, 831 residues long: Probable inactive serine/threonine-protein kinase DDB_G0274613 (831 aa).

The segment at 9–63 (CSICSEEVIDFAAIFSSNKKFGDKACKHNFCVSCLTYLMEYNTRNKKALCCPICR) adopts an RING-type zinc-finger fold. Residues 83–348 (RKLSSAQIFL…LEEMKLLYQF (266 aa)) adopt a coiled-coil conformation. Residues 414 to 787 (QIHKVSIGNG…ANQAAFHKFF (374 aa)) enclose the Protein kinase domain. The tract at residues 657–703 (NNNNNNNNNNNNNNNNNNNNNNNNNNNNNNNNNNNNNNNNNIESNFN) is disordered.

The protein belongs to the protein kinase superfamily. CMGC Ser/Thr protein kinase family.

The polypeptide is Probable inactive serine/threonine-protein kinase DDB_G0274613 (Dictyostelium discoideum (Social amoeba)).